A 931-amino-acid chain; its full sequence is MLLFFALGLLIHFVFFASIFDIYFTSPLVHGMTPQFTPLPPPAKRLVLFVADGLRADTLYELDEDGNSRAPFIRNVIIHEGSWGVSHTRVPTESRPGHVALIAGFYEDVSAVAKGWKENPVEFDSLFNESKYTWSWGSPDILPMFAKGASGDHVYTYSYDAQREDFGAHDATKLDTWVFDKVKDFFDAARNNQSLFTKVNEEKVVFFLHLLGIDTNGHAHRPSSREYKDNIKKVDDGVKEIVSIFKHFYGDDGKTAFIFTSDHGMTDWGSHGAGHPSETLTPFVTWGAGIKFPQNVSAQQYDDEFLKEWRLENWKRRDVNQADIAPLMASLIGVPFPLNSVGILPVGYLNNTGLFKAESMFTNAVQILEQFKVKMTQKKEATLPFLFTPFKLLSDSQQLDILRKARSYIKQEKFDEVVSLCEELIDLALRGLSYYHTYDRLFLGINVAVGFVGWMSYTSLLIIKSHSNIPKGTRKEGKKPHCLLLYSFIATGVLVACFLMIQACPWTYYVYCLLPVPIWYAVLREHEVIQDLVESLLTFPRSHFVAYLLVFTLGIEVLVLSFFYRYMLTAGLIVFAGWPFLTQLWTRAKITFLSWAFFSLLLAVFPLMPVVGRKPNLSLVMGAGFLVLLLSLAVVTTLGKRNIKLVKGELLVLLLQMLSTVLSMYVVYSTHHSLLKKEGLPLMNQIVSWATLASSLVAPLLSSTALSQRLASILLSLMSTYLLLSTGYEALFPLVLSCLMFVWIQVEQETLQQPGVSCKQKLTSIQFTCDTDIAQFRQLCPDDIRRAFFLVFFLLTAFFGTGNIASINSFDLASVYCFLTVFSPFMMGALMMWKILIPFVLVMCAFEAVQITTQLSSKGLFLVVLIISDIMALHFFFLVKDSGSWLDIGTSISHYVIVMSMTIFLVFLNGLAQLLTTKKLQLCGKPKSHLM.

M1 is a topological domain (cytoplasmic). The chain crosses the membrane as a helical span at residues 2–22; sequence LLFFALGLLIHFVFFASIFDI. Over 23–442 the chain is Lumenal; it reads YFTSPLVHGM…SYYHTYDRLF (420 aa). N128, N192, N295, and N350 each carry an N-linked (GlcNAc...) asparagine glycan. A helical transmembrane segment spans residues 443–463; the sequence is LGINVAVGFVGWMSYTSLLII. The Cytoplasmic portion of the chain corresponds to 464–480; that stretch reads KSHSNIPKGTRKEGKKP. A helical membrane pass occupies residues 481–501; sequence HCLLLYSFIATGVLVACFLMI. Residue Q502 is a topological domain, lumenal. The chain crosses the membrane as a helical span at residues 503–523; the sequence is ACPWTYYVYCLLPVPIWYAVL. Residues 524 to 543 are Cytoplasmic-facing; it reads REHEVIQDLVESLLTFPRSH. The helical transmembrane segment at 544 to 564 threads the bilayer; the sequence is FVAYLLVFTLGIEVLVLSFFY. Position 565 (R565) is a topological domain, lumenal. A helical transmembrane segment spans residues 566–586; the sequence is YMLTAGLIVFAGWPFLTQLWT. At 587–591 the chain is on the cytoplasmic side; the sequence is RAKIT. Residues 592 to 612 traverse the membrane as a helical segment; sequence FLSWAFFSLLLAVFPLMPVVG. Over 613–618 the chain is Lumenal; the sequence is RKPNLS. N-linked (GlcNAc...) asparagine glycosylation occurs at N616. The helical transmembrane segment at 619–639 threads the bilayer; sequence LVMGAGFLVLLLSLAVVTTLG. The Cytoplasmic segment spans residues 640-649; the sequence is KRNIKLVKGE. A helical transmembrane segment spans residues 650 to 670; it reads LLVLLLQMLSTVLSMYVVYST. Residues 671–685 lie on the Lumenal side of the membrane; sequence HHSLLKKEGLPLMNQ. The helical transmembrane segment at 686 to 706 threads the bilayer; the sequence is IVSWATLASSLVAPLLSSTAL. The Cytoplasmic segment spans residues 707 to 723; that stretch reads SQRLASILLSLMSTYLL. The chain crosses the membrane as a helical span at residues 724-744; it reads LSTGYEALFPLVLSCLMFVWI. At 745–786 the chain is on the lumenal side; it reads QVEQETLQQPGVSCKQKLTSIQFTCDTDIAQFRQLCPDDIRR. A helical transmembrane segment spans residues 787–807; that stretch reads AFFLVFFLLTAFFGTGNIASI. Residues 808–824 are Cytoplasmic-facing; sequence NSFDLASVYCFLTVFSP. A helical membrane pass occupies residues 825-845; sequence FMMGALMMWKILIPFVLVMCA. Residues 846-858 are Lumenal-facing; it reads FEAVQITTQLSSK. The chain crosses the membrane as a helical span at residues 859–879; the sequence is GLFLVVLIISDIMALHFFFLV. At 880-894 the chain is on the cytoplasmic side; that stretch reads KDSGSWLDIGTSISH. A helical transmembrane segment spans residues 895–915; the sequence is YVIVMSMTIFLVFLNGLAQLL. Over 916-931 the chain is Lumenal; it reads TTKKLQLCGKPKSHLM.

This sequence belongs to the PIGG/PIGN/PIGO family. PIGN subfamily.

The protein resides in the endoplasmic reticulum membrane. It functions in the pathway glycolipid biosynthesis; glycosylphosphatidylinositol-anchor biosynthesis. In terms of biological role, ethanolamine phosphate transferase that catalyzes an ethanolamine phosphate (EtNP) transfer from phosphatidylethanolamine (PE) to the 2-OH position of the first alpha-1,4-linked mannose of the alpha-D-Man-(1-&gt;6)-alpha-D-Man-(1-&gt;4)-alpha-D-GlcN-(1-&gt;6)-(1-radyl,2-acyl-sn-glycero-3-phospho)-2-acyl-inositol (also termed H3) intermediate to generate an alpha-D-Man-(1-&gt;6)-2-PEtn-alpha-D-Man-(1-&gt;4)-alpha-D-GlcN-(1-&gt;6)-(1-radyl,2-acyl-sn-glycero-3-phospho)-2-acyl-inositol and participates in the eighth step of the glycosylphosphatidylinositol-anchor biosynthesis. May act as suppressor of replication stress and chromosome missegregation. The polypeptide is GPI ethanolamine phosphate transferase 1 (Mus musculus (Mouse)).